The following is a 347-amino-acid chain: Fc receptor-like A (347 aa).

The first 27 residues, 1 to 27 (MKLSCMLIEWALYVCPAVLLATQMSLA), serve as a signal peptide directing secretion. Ig-like C2-type domains follow at residues 77-166 (PFHL…ETAS) and 179-257 (PVLK…RQIS). Cystine bridges form between cysteine 106/cysteine 150 and cysteine 199/cysteine 247. The interval 272–296 (KPATPETPPPAKAPGPLPLLPTPSD) is disordered. Over residues 276-292 (PETPPPAKAPGPLPLLP) the composition is skewed to pro residues.

As to quaternary structure, monomer or homodimer; disulfide-linked.

The protein localises to the cytoplasm. Functionally, may be implicated in B-cell differentiation and lymphomagenesis. This chain is Fc receptor-like A (Fcrla), found in Rattus norvegicus (Rat).